We begin with the raw amino-acid sequence, 977 residues long: GAS2-like protein pickled eggs (977 aa).

The 140-residue stretch at 20–159 (EAMREDLAEW…CLLEVARRGA (140 aa)) folds into the Calponin-homology (CH) domain. A disordered region spans residues 218–245 (VETDLYDDSDDSETEDDGDQNPVLMYGP). Residues 221-236 (DLYDDSDDSETEDDGD) are compositionally biased toward acidic residues. One can recognise a GAR domain in the interval 252–324 (NDLKSLDEMV…HYLDKHDPCR (73 aa)). Disordered regions lie at residues 397–543 (PTLQ…SEIS), 557–624 (AQKR…VCDG), 666–685 (VANTMGNPTPNLSKIPRSPL), 693–803 (IDNS…KGRS), and 910–977 (NLER…TELY). Polar residues-rich tracts occupy residues 399–428 (LQNGHSLSPNSGKYRSRSPTPQRKFLNQQA) and 436–454 (ATGSSQTVTTDTSSGQLLG). The span at 502–527 (GGSGVGSAAGGVSSGSAGSGVAGEQG) shows a compositional bias: gly residues. Residues 577 to 589 (RLDQTSSDSQISP) show a composition bias toward polar residues. Over residues 601–620 (ILEEEDLNGQDREEDQEDYS) the composition is skewed to acidic residues. 2 stretches are compositionally biased toward polar residues: residues 666 to 677 (VANTMGNPTPNL) and 731 to 741 (TRNSTGATTTP). The segment covering 928-953 (SSAASSCESNNSNAGAGSGAAAGSAS) has biased composition (low complexity).

The protein belongs to the GAS2 family. In terms of tissue distribution, expressed in the ovary and the ring canals of the germline cells. In larvae, expressed in the notal region of the wing disk.

Its subcellular location is the cytoplasm. It localises to the cytoskeleton. It is found in the cell cortex. Its function is as follows. Essential for development and viability. Required for ovary development and oogenesis, and is essential for the development of the indirect flight muscles. May act as a negative regulator of the Notch signaling pathway in certain tissues, such as the muscle precursors and ovaries. May function as a linker protein between the actin and microtubule cytoskeletons. The sequence is that of GAS2-like protein pickled eggs from Drosophila melanogaster (Fruit fly).